The primary structure comprises 318 residues: uncharacterized protein (318 aa).

A run of 2 helical transmembrane segments spans residues 230 to 250 and 264 to 284; these read VWTY…SFLI and ASLM…LGVI.

The protein belongs to the glycosyltransferase 2 family. GtrB subfamily.

It is found in the cell membrane. This is an uncharacterized protein from Synechocystis sp. (strain ATCC 27184 / PCC 6803 / Kazusa).